Here is a 368-residue protein sequence, read N- to C-terminus: Left-right determination factor 1 (368 aa).

The first 21 residues, 1-21 (MPFLWLCWALWALSLVSLREA), serve as a signal peptide directing secretion. A propeptide spans 22–76 (LTGEQILGSLLQQLQLDQPPVLDKADVEGMVIPSHVRTQYVALLQHSHASRSRGK) (or 135). Asn158 carries an N-linked (GlcNAc...) asparagine glycan. Intrachain disulfides connect Cys253–Cys266, Cys265–Cys318, Cys295–Cys353, and Cys299–Cys355.

The protein belongs to the TGF-beta family. In terms of processing, the processing of the protein may also occur at the second R-X-X-R site located at AA 132-135. Processing appears to be regulated in a cell-type specific manner.

It is found in the secreted. Functionally, required for left-right axis determination as a regulator of LEFTY2 and NODAL. In Mus musculus (Mouse), this protein is Left-right determination factor 1 (Lefty1).